The sequence spans 345 residues: Protein-arginine kinase (345 aa).

A Phosphagen kinase C-terminal domain is found at 15–245 (LVISSRIRLA…LQIINQEIIS (231 aa)). Residues 18–22 (SSRIR), H82, R116, 167–171 (RASVM), and 198–203 (RGLYGE) each bind ATP. An RDXXRA motif of the pArg binding pocket involved in allosteric regulation motif is present at residues 328–333 (RDFNRA).

Belongs to the ATP:guanido phosphotransferase family.

It catalyses the reaction L-arginyl-[protein] + ATP = N(omega)-phospho-L-arginyl-[protein] + ADP + H(+). Its activity is regulated as follows. Appears to be allosterically activated by the binding of pArg-containing polypeptides to the pArg-binding pocket localized in the C-terminal domain of McsB. Its function is as follows. Catalyzes the specific phosphorylation of arginine residues in proteins. The sequence is that of Protein-arginine kinase from Clostridium kluyveri (strain NBRC 12016).